A 393-amino-acid polypeptide reads, in one-letter code: Envelope glycoprotein D (393 aa).

The first 25 residues, Met-1–Ala-25, serve as a signal peptide directing secretion. The interval Ala-25–Pro-57 is interaction with TNFRSF14. The Virion surface segment spans residues Lys-26–Gly-340. Zn(2+) is bound at residue His-64. Disulfide bonds link Cys-91/Cys-214, Cys-131/Cys-227, and Cys-143/Cys-152. 2 N-linked (GlcNAc...) asparagine; by host glycosylation sites follow: Asn-119 and Asn-146. Residue Asp-240 participates in Zn(2+) binding. The tract at residues Leu-261–Glu-305 is profusion. A compositionally biased stretch (polar residues) spans Thr-274–Gln-290. Residues Thr-274–Ser-301 are disordered. Residue Asn-287 is glycosylated (N-linked (GlcNAc...) asparagine; by host). The helical transmembrane segment at Leu-341–Phe-361 threads the bilayer. Topologically, residues Trp-362–Tyr-393 are intravirion.

The protein belongs to the herpesviridae glycoprotein D family. Homodimer. Interacts with host receptor TNFRSF14. Interacts with host receptor NECTIN1. Interacts with host receptor NECTIN2. Interacts (via profusion domain) with gB; this interaction occurs in the absence of gH/gL. Interacts (via profusion domain) with gH/gL heterodimer; this interaction occurs in the absence of gB. Associates with the gB-gH/gL-gD complex. Interacts (via C-terminus) with UL11 tegument protein.

It localises to the virion membrane. Functionally, envelope glycoprotein that binds to the host cell entry receptors NECTIN1 and TNFRSF14/HVEM, promoting the virus entry into host cells. May trigger fusion with host membrane, by recruiting the fusion machinery composed of gB and gH/gL. The chain is Envelope glycoprotein D (gD) from Human herpesvirus 2 (strain HG52) (HHV-2).